A 283-amino-acid chain; its full sequence is tRNA-cytidine(32) 2-sulfurtransferase (283 aa).

The short motif at 37 to 42 (SGGKDS) is the PP-loop motif element. [4Fe-4S] cluster-binding residues include Cys112, Cys115, and Cys203.

This sequence belongs to the TtcA family. Homodimer. Mg(2+) serves as cofactor. The cofactor is [4Fe-4S] cluster.

Its subcellular location is the cytoplasm. It carries out the reaction cytidine(32) in tRNA + S-sulfanyl-L-cysteinyl-[cysteine desulfurase] + AH2 + ATP = 2-thiocytidine(32) in tRNA + L-cysteinyl-[cysteine desulfurase] + A + AMP + diphosphate + H(+). It functions in the pathway tRNA modification. In terms of biological role, catalyzes the ATP-dependent 2-thiolation of cytidine in position 32 of tRNA, to form 2-thiocytidine (s(2)C32). The sulfur atoms are provided by the cysteine/cysteine desulfurase (IscS) system. In Legionella pneumophila subsp. pneumophila (strain Philadelphia 1 / ATCC 33152 / DSM 7513), this protein is tRNA-cytidine(32) 2-sulfurtransferase.